Reading from the N-terminus, the 226-residue chain is ATP-dependent dethiobiotin synthetase BioD (226 aa).

13–18 (DVGKTL) serves as a coordination point for ATP. T17 serves as a coordination point for Mg(2+). Residue K38 is part of the active site. Residues D55, 117-120 (EGAG), 177-178 (NR), 206-208 (PFV), and E213 contribute to the ATP site. Residues D55 and E117 each coordinate Mg(2+).

It belongs to the dethiobiotin synthetase family. As to quaternary structure, homodimer. Requires Mg(2+) as cofactor.

It is found in the cytoplasm. The enzyme catalyses (7R,8S)-7,8-diammoniononanoate + CO2 + ATP = (4R,5S)-dethiobiotin + ADP + phosphate + 3 H(+). It participates in cofactor biosynthesis; biotin biosynthesis; biotin from 7,8-diaminononanoate: step 1/2. Catalyzes a mechanistically unusual reaction, the ATP-dependent insertion of CO2 between the N7 and N8 nitrogen atoms of 7,8-diaminopelargonic acid (DAPA, also called 7,8-diammoniononanoate) to form a ureido ring. This Aeromonas salmonicida (strain A449) protein is ATP-dependent dethiobiotin synthetase BioD.